Here is a 1082-residue protein sequence, read N- to C-terminus: Probable arabinosyltransferase B (1082 aa).

Transmembrane regions (helical) follow at residues 28–50 (WVATIAGLLGFVLSVSIPLLPVT), 223–241 (LAAMLLAIVSTVIALLALW), 262–281 (VTAVDGVVVGGMAIWYVIGA), 333–352 (SIWIRLPDLICALICWLLLS), 359–381 (LGPAVAGSRAAMWAAGLVLLGAW), 420–442 (AITTAAFTLGIQPTGLIAVAALL), 462–481 (WPLIAPLLAAGTVILAVVFA), 522–544 (AISRRVAFVFTAMCLFPSLFMML), 557–574 (AWRLMGIIFATMFFLMFT), 578–600 (WTHHFGLFAAVGGAMAALATVLV), 613–635 (AFLSLVLFVLAFCFASTNGWWYV), 650–672 (GGVQISAIFFALSAIAALWAFWL), and 689–711 (APIPVAAGFMVVVMMASMAIGVV).

It belongs to the emb family.

It is found in the cell membrane. In terms of biological role, arabinosyl transferase responsible for the polymerization of arabinose into the arabinan of arabinogalactan. The sequence is that of Probable arabinosyltransferase B (embB) from Mycolicibacterium smegmatis (Mycobacterium smegmatis).